We begin with the raw amino-acid sequence, 448 residues long: Probable glucuronoxylan glucuronosyltransferase IRX7 (448 aa).

Residues 1–16 (MTTHKHRRTEKNLCFK) are Cytoplasmic-facing. A helical; Signal-anchor for type II membrane protein membrane pass occupies residues 17 to 37 (QYYKWILCFILTLYFFASFFV). Residues 38–448 (DHDQDHRSST…RSVRRSNSFL (411 aa)) are Lumenal-facing. Asn157, Asn189, Asn287, Asn397, and Asn438 each carry an N-linked (GlcNAc...) asparagine glycan.

Belongs to the glycosyltransferase 47 family. In terms of tissue distribution, expressed in developing interfascicular fibers and xylem cells in stems and developing secondary xylem in roots.

The protein localises to the golgi apparatus membrane. Its function is as follows. Involved in the synthesis of the hemicellulose glucuronoxylan, a major component of secondary cell walls. Probably involved in the synthesis of the glycosyl sequence at the glucuronoxylan reducing end. The sequence is that of Probable glucuronoxylan glucuronosyltransferase IRX7 (IRX7) from Arabidopsis thaliana (Mouse-ear cress).